A 429-amino-acid polypeptide reads, in one-letter code: UPF0761 membrane protein ABO_1543 (429 aa).

The next 6 helical transmembrane spans lie at 45 to 65 (LFAIVPVMTVSFVVLSSVPAL), 102 to 122 (LTVLGIVFLVVTSVLMLSTVE), 141 to 161 (LLMYWALLSLGPICLGLGLAI), 184 to 204 (WLAVLPFLFTTAMLTLMYTVV), 216 to 236 (LGAAMAALLFELAKGAFTFFI), and 256 to 278 (LLWIYISWTIVLGGAELVRALVV).

It belongs to the UPF0761 family.

It is found in the cell inner membrane. This chain is UPF0761 membrane protein ABO_1543, found in Alcanivorax borkumensis (strain ATCC 700651 / DSM 11573 / NCIMB 13689 / SK2).